Consider the following 1029-residue polypeptide: Multiple C2 domain and transmembrane region protein 6 (1029 aa).

In terms of domain architecture, C2 1 spans 1 to 111; the sequence is MNKLVVEIVD…SGVQRYPLDK (111 aa). The segment at 187-224 is disordered; the sequence is TKKKEKESRTFHSIGAHAGGGGGAPPMSQAKQAYPPPP. C2 domains are found at residues 277 to 398, 437 to 562, and 605 to 727; these read RSSG…PQWY, RVSH…PRWF, and FSSD…THFY. Residues D310, D316, D363, D365, and D371 each coordinate Ca(2+). 2 helical membrane passes run 864–884 and 976–996; these read LILV…LFVI and FALI…AIII.

This sequence belongs to the MCTP family. It depends on Ca(2+) as a cofactor. Expressed in the vascular tissues of cotyledons and rosette leaves. Accumulates in roots caps and shoot apical meristems (SAMs). Observed in flowers.

The protein localises to the cell membrane. It localises to the cytoplasm. The protein resides in the endosome membrane. Regulates flowering time under long days. May function as a signaling molecule by regulating the trafficking of other regulators. This Arabidopsis thaliana (Mouse-ear cress) protein is Multiple C2 domain and transmembrane region protein 6.